Reading from the N-terminus, the 478-residue chain is NADH-quinone oxidoreductase subunit N (478 aa).

The next 13 membrane-spanning stretches (helical) occupy residues 8–28 (LVLPEVLLAIYAMGVLLFGVW), 38–58 (ILWASAVTMLALALIIGLGTG), 62–82 (AFGGLFIADGFARFSKVVILV), 106–126 (PILIVLAVVGMMMMVSAGDLM), 160–180 (FVLGSLSSGLLLYGASLVYGF), 200–220 (IGLLFGLVFLLAGLAFKVSAV), 234–254 (PTPVTAFFATAPKLAAMALIA), 268–288 (WGQILAALALASMYLGAIAGI), 300–320 (SSISHMGFGLLGLAAGTAAGV), 322–342 (SMLLYMTIYIVMNVGTFAFIL), 368–388 (AFALLVLLFSLAGVPPMLGFF), 398–418 (IGAGFVWVPVAAVVASVIGAF), and 445–465 (FAFLVLAAVAMLGGAINMAGV).

Belongs to the complex I subunit 2 family. NDH-1 is composed of 14 different subunits. Subunits NuoA, H, J, K, L, M, N constitute the membrane sector of the complex.

Its subcellular location is the cellular chromatophore membrane. The enzyme catalyses a quinone + NADH + 5 H(+)(in) = a quinol + NAD(+) + 4 H(+)(out). In terms of biological role, NDH-1 shuttles electrons from NADH, via FMN and iron-sulfur (Fe-S) centers, to quinones in the respiratory chain. The immediate electron acceptor for the enzyme in this species is believed to be ubiquinone. Couples the redox reaction to proton translocation (for every two electrons transferred, four hydrogen ions are translocated across the cytoplasmic membrane), and thus conserves the redox energy in a proton gradient. The polypeptide is NADH-quinone oxidoreductase subunit N (Rhodobacter capsulatus (Rhodopseudomonas capsulata)).